Consider the following 365-residue polypeptide: Chorismate synthase (365 aa).

R48 lines the NADP(+) pocket. FMN contacts are provided by residues 130 to 132 (RSS), 242 to 243 (NA), G290, 305 to 309 (KPTSS), and R331.

The protein belongs to the chorismate synthase family. Homotetramer. Requires FMNH2 as cofactor.

It catalyses the reaction 5-O-(1-carboxyvinyl)-3-phosphoshikimate = chorismate + phosphate. Its pathway is metabolic intermediate biosynthesis; chorismate biosynthesis; chorismate from D-erythrose 4-phosphate and phosphoenolpyruvate: step 7/7. Its function is as follows. Catalyzes the anti-1,4-elimination of the C-3 phosphate and the C-6 proR hydrogen from 5-enolpyruvylshikimate-3-phosphate (EPSP) to yield chorismate, which is the branch point compound that serves as the starting substrate for the three terminal pathways of aromatic amino acid biosynthesis. This reaction introduces a second double bond into the aromatic ring system. The sequence is that of Chorismate synthase from Erythrobacter litoralis (strain HTCC2594).